Consider the following 276-residue polypeptide: MLLSLVKFGILSVFLLAQEAVAIQLWNNTDGFSDDVPAAGRSALTFDVKCANYLVTARDVANGAALVGNLESHYCTEECHDSIDNFQRSSHLAYGTKAYALFKNSTARVVPGDIVNGLMWAYELSCIKDSTGYCLAGIYNHTKTACSECTLKYGAVMASSGYGRKQFPPNVFSSLLSSCNVPASSYTYVYTSSNPTTTPESSGVPSSATATPTSTCTGKTYIAKEDDTCKSISEAQSISTDRLVEVNHLDYSCSSLTSGTALCIEKNCTVYTVQAN.

A signal peptide spans 1 to 22 (MLLSLVKFGILSVFLLAQEAVA). Residues Asn27, Asn104, and Asn140 are each glycosylated (N-linked (GlcNAc...) asparagine). A LysM domain is found at 219-264 (KTYIAKEDDTCKSISEAQSISTDRLVEVNHLDYSCSSLTSGTALCI). Asn267 carries N-linked (GlcNAc...) asparagine glycosylation.

Belongs to the secreted LysM effector family.

It localises to the secreted. Secreted LysM effector that might have a role in sequestration of chitin oligosaccharides (breakdown products of fungal cell walls that are released during invasion and act as triggers of host immunity) to dampen host defense. The protein is Secreted LysM effector LysM10 of Penicillium expansum (Blue mold rot fungus).